We begin with the raw amino-acid sequence, 208 residues long: MSKILKIQYLKLYNVISCFLWMSVLLRTGLIWGITKDTAVVFHETNTLVRWVQTLAIAEVFHSIFGLVSSSPLTTIIQVASRLYLVWGVCYPFSYVIEGSPIYLSMIIAWSITEIIRYAFYAFNLNGDIPAFLTWLRYNTFLILYPIGAGSEFLLVLKSRIAAQYVWSLNKLLWPILMSIYPPGLYIMYTHMLAQRRKISKRAAARRT.

The Cytoplasmic segment spans residues 1-11; the sequence is MSKILKIQYLK. A helical membrane pass occupies residues 12-35; it reads LYNVISCFLWMSVLLRTGLIWGIT. At 36–46 the chain is on the lumenal side; it reads KDTAVVFHETN. Residues 47-67 traverse the membrane as a helical segment; the sequence is TLVRWVQTLAIAEVFHSIFGL. The Cytoplasmic portion of the chain corresponds to 68 to 78; that stretch reads VSSSPLTTIIQ. Residues 79-97 form a helical membrane-spanning segment; it reads VASRLYLVWGVCYPFSYVI. The Lumenal portion of the chain corresponds to 98–102; it reads EGSPI. Residues 103-123 form a helical membrane-spanning segment; that stretch reads YLSMIIAWSITEIIRYAFYAF. Topologically, residues 124–134 are cytoplasmic; the sequence is NLNGDIPAFLT. A helical transmembrane segment spans residues 135–157; sequence WLRYNTFLILYPIGAGSEFLLVL. Residues Tyr145 and Glu152 contribute to the active site. Topologically, residues 158-171 are lumenal; the sequence is KSRIAAQYVWSLNK. Residues 172 to 192 traverse the membrane as a helical segment; the sequence is LLWPILMSIYPPGLYIMYTHM. The Cytoplasmic portion of the chain corresponds to 193–208; that stretch reads LAQRRKISKRAAARRT.

It belongs to the very long-chain fatty acids dehydratase HACD family.

It localises to the endoplasmic reticulum membrane. The enzyme catalyses a very-long-chain (3R)-3-hydroxyacyl-CoA = a very-long-chain (2E)-enoyl-CoA + H2O. Its pathway is lipid metabolism; fatty acid biosynthesis. Functionally, catalyzes the third of the four reactions of the long-chain fatty acids elongation cycle. This endoplasmic reticulum-bound enzymatic process, allows the addition of two carbons to the chain of long- and very long-chain fatty acids/VLCFAs per cycle. This enzyme catalyzes the dehydration of the 3-hydroxyacyl-CoA intermediate into trans-2,3-enoyl-CoA, within each cycle of fatty acid elongation. Thereby, it participates in the production of VLCFAs of different chain lengths that are involved in multiple biological processes as precursors of membrane lipids and lipid mediators. In Schizosaccharomyces pombe (strain 972 / ATCC 24843) (Fission yeast), this protein is Probable very-long-chain (3R)-3-hydroxyacyl-CoA dehydratase.